We begin with the raw amino-acid sequence, 399 residues long: Tryptophan synthase beta chain (399 aa).

Lys90 carries the post-translational modification N6-(pyridoxal phosphate)lysine.

The protein belongs to the TrpB family. In terms of assembly, tetramer of two alpha and two beta chains. Pyridoxal 5'-phosphate serves as cofactor.

It carries out the reaction (1S,2R)-1-C-(indol-3-yl)glycerol 3-phosphate + L-serine = D-glyceraldehyde 3-phosphate + L-tryptophan + H2O. It functions in the pathway amino-acid biosynthesis; L-tryptophan biosynthesis; L-tryptophan from chorismate: step 5/5. In terms of biological role, the beta subunit is responsible for the synthesis of L-tryptophan from indole and L-serine. This is Tryptophan synthase beta chain from Phocaeicola vulgatus (strain ATCC 8482 / DSM 1447 / JCM 5826 / CCUG 4940 / NBRC 14291 / NCTC 11154) (Bacteroides vulgatus).